A 331-amino-acid polypeptide reads, in one-letter code: UPF0284 protein PF0303 (331 aa).

It belongs to the UPF0284 family.

The sequence is that of UPF0284 protein PF0303 from Pyrococcus furiosus (strain ATCC 43587 / DSM 3638 / JCM 8422 / Vc1).